Reading from the N-terminus, the 567-residue chain is Proline--tRNA ligase (567 aa).

This sequence belongs to the class-II aminoacyl-tRNA synthetase family. ProS type 1 subfamily. In terms of assembly, homodimer.

The protein localises to the cytoplasm. It catalyses the reaction tRNA(Pro) + L-proline + ATP = L-prolyl-tRNA(Pro) + AMP + diphosphate. Functionally, catalyzes the attachment of proline to tRNA(Pro) in a two-step reaction: proline is first activated by ATP to form Pro-AMP and then transferred to the acceptor end of tRNA(Pro). As ProRS can inadvertently accommodate and process non-cognate amino acids such as alanine and cysteine, to avoid such errors it has two additional distinct editing activities against alanine. One activity is designated as 'pretransfer' editing and involves the tRNA(Pro)-independent hydrolysis of activated Ala-AMP. The other activity is designated 'posttransfer' editing and involves deacylation of mischarged Ala-tRNA(Pro). The misacylated Cys-tRNA(Pro) is not edited by ProRS. In Staphylococcus epidermidis (strain ATCC 35984 / DSM 28319 / BCRC 17069 / CCUG 31568 / BM 3577 / RP62A), this protein is Proline--tRNA ligase.